The following is a 157-amino-acid chain: Pyruvoyl-dependent arginine decarboxylase 1 (157 aa).

Ser41 is modified (pyruvic acid (Ser)).

The protein belongs to the PdaD family. Requires pyruvate as cofactor.

It catalyses the reaction L-arginine + H(+) = agmatine + CO2. In Archaeoglobus fulgidus (strain ATCC 49558 / DSM 4304 / JCM 9628 / NBRC 100126 / VC-16), this protein is Pyruvoyl-dependent arginine decarboxylase 1 (pdaD1).